The following is a 472-amino-acid chain: Adenosylhomocysteinase (472 aa).

3 residues coordinate substrate: Thr-61, Asp-136, and Glu-196. 197–199 (TTT) provides a ligand contact to NAD(+). Residues Lys-226 and Asp-230 each coordinate substrate. Residues Asn-231, 260–265 (GYGDVG), Glu-283, Asn-318, 339–341 (IGH), and Asn-384 contribute to the NAD(+) site.

It belongs to the adenosylhomocysteinase family. It depends on NAD(+) as a cofactor.

It localises to the cytoplasm. It catalyses the reaction S-adenosyl-L-homocysteine + H2O = L-homocysteine + adenosine. The protein operates within amino-acid biosynthesis; L-homocysteine biosynthesis; L-homocysteine from S-adenosyl-L-homocysteine: step 1/1. Functionally, may play a key role in the regulation of the intracellular concentration of adenosylhomocysteine. This chain is Adenosylhomocysteinase, found in Cupriavidus pinatubonensis (strain JMP 134 / LMG 1197) (Cupriavidus necator (strain JMP 134)).